Here is a 60-residue protein sequence, read N- to C-terminus: MNFSKVFALVLLIGLVLLTGHTEAGGLKKLGKKLEGVGKRVFKASEKALPVVTGYKAIGK.

The signal sequence occupies residues 1–24 (MNFSKVFALVLLIGLVLLTGHTEA).

It belongs to the cecropin family.

It is found in the secreted. Its function is as follows. Putative antimicrobial peptide. Partially neutralizes lipopolysaccharides (LPS). Exhibits anti-inflammatory properties: inhibits LPS-induced iNOS/NOS2 transcription, nitric oxide (NO) and pro-inflammatory cytokine production in mouse macrophages and human peripheral blood mononuclear cells (PBMCs); inhibits LPS-induced activation of MAPK and NF-kappa-B signaling pathways in mouse macrophages. This is Cecropin-B1 from Aedes aegypti (Yellowfever mosquito).